A 570-amino-acid polypeptide reads, in one-letter code: Putative pyruvate decarboxylase C3G9.11c (570 aa).

Asp30 and His119 together coordinate pyruvate. Thiamine diphosphate-binding positions include Thr396 and 419 to 421; that span reads GSI. Mg(2+) is bound at residue Asp451. Thiamine diphosphate-binding positions include 452 to 453 and 478 to 483; these read GS and NKGYTI. Residues Asn478 and Gly480 each coordinate Mg(2+). Glu484 provides a ligand contact to pyruvate.

This sequence belongs to the TPP enzyme family. In terms of assembly, homotetramer. Mg(2+) serves as cofactor. Thiamine diphosphate is required as a cofactor.

The protein localises to the cytoplasm. It is found in the nucleus. The catalysed reaction is a 2-oxocarboxylate + H(+) = an aldehyde + CO2. The enzyme catalyses pyruvate + H(+) = acetaldehyde + CO2. The protein is Putative pyruvate decarboxylase C3G9.11c of Schizosaccharomyces pombe (strain 972 / ATCC 24843) (Fission yeast).